We begin with the raw amino-acid sequence, 308 residues long: 26S proteasome regulatory subunit rpn11 (308 aa).

Positions 30–165 constitute an MPN domain; that stretch reads VYISSLALLK…IDAFRLINPS (136 aa). Residues histidine 112, histidine 114, and aspartate 125 each coordinate Zn(2+). Residues 112–125 carry the JAMM motif motif; that stretch reads HSHPGFGCWLSSVD.

The protein belongs to the peptidase M67A family. As to quaternary structure, the 26S proteasome is composed of a core protease, known as the 20S proteasome, capped at one or both ends by the 19S regulatory complex (RC). The RC is composed of at least 18 different subunits in two subcomplexes, the base and the lid, which form the portions proximal and distal to the 20S proteolytic core, respectively.

In terms of biological role, acts as a regulatory subunit of the 26 proteasome which is involved in the ATP-dependent degradation of ubiquitinated proteins. Functionally, transcription factor pap1 is controlled by the functional interaction between the positive regulator pad1 and negative regulator crm1. Both these proteins are also essential for cell viability and for the maintenance of chromosome structure. Pad1 is also responsible for resistance to staurosporine, and other drugs such as cycloheximide and caffeine. The protein is 26S proteasome regulatory subunit rpn11 (rpn11) of Schizosaccharomyces pombe (strain 972 / ATCC 24843) (Fission yeast).